Consider the following 129-residue polypeptide: UPF0148 protein APE_0207 (129 aa).

The protein belongs to the UPF0148 family.

This chain is UPF0148 protein APE_0207, found in Aeropyrum pernix (strain ATCC 700893 / DSM 11879 / JCM 9820 / NBRC 100138 / K1).